Consider the following 1274-residue polypeptide: Paired amphipathic helix protein Sin3a (1274 aa).

Disordered regions lie at residues 1–26 and 85–110; these read MKRR…STEA and HHHP…PPVA. A Phosphoserine modification is found at S10. In terms of domain architecture, PAH 1 spans 119-189; that stretch reads QRLKVEDALS…MGFNTFLPPG (71 aa). An interaction with HCFC1 region spans residues 119–196; that stretch reads QRLKVEDALS…PPGYKIEVQT (78 aa). Glycyl lysine isopeptide (Lys-Gly) (interchain with G-Cter in SUMO2) cross-links involve residues K122 and K134. A disordered region spans residues 205-297; the sequence is PGQVHQIPTH…ISLGTAPSLQ (93 aa). The interaction with REST stretch occupies residues 205–479; that stretch reads PGQVHQIPTH…KVRKALRSAE (275 aa). Positions 228–237 are enriched in low complexity; the sequence is SQPSSQSAPT. Residues 252–266 are compositionally biased toward polar residues; sequence KPSQLQAHTPASQQT. Pro residues predominate over residues 267-282; the sequence is PPLPPYASPRSPPVQP. Residue S277 is modified to Phosphoserine. Position 284 is a phosphothreonine (T284). Over residues 284–297 the composition is skewed to polar residues; the sequence is TPVTISLGTAPSLQ. The region spanning 300–383 is the PAH 2 domain; sequence QPVEFNHAIN…SEFGQFLPDA (84 aa). Residues 398 to 443 form a disordered region; it reads DSVRNDHGGTVKKPQLNNKPQRPSQNGCQIRRHSGTGATPPVKKKP. Residues 412 to 425 are compositionally biased toward polar residues; the sequence is QLNNKPQRPSQNGC. The PAH 3 domain maps to 457 to 526; sequence SKHGVGTESL…NWFKNFLGYK (70 aa). Residues 459-526 form an interaction with SAP30 region; that stretch reads HGVGTESLFF…NWFKNFLGYK (68 aa). An N6-acetyllysine modification is found at K470. An interaction with NCOR1 region spans residues 524-851; it reads GYKESVHLES…EMDVDEATGA (328 aa). The tract at residues 525–660 is interactions with SUDS3 and SAP130; that stretch reads YKESVHLESF…KFRLDNTLGG (136 aa). K564 participates in a covalent cross-link: Glycyl lysine isopeptide (Lys-Gly) (interchain with G-Cter in SUMO2). Residues 688–830 form an interactions with HDAC1 and ARID4B region; that stretch reads NPSIAVPIVL…IPDLLFAQRG (143 aa). S833 is modified (phosphoserine). The span at 835-847 shows a compositional bias: acidic residues; it reads VEEEEEEEMDVDE. Residues 835-865 form a disordered region; that stretch reads VEEEEEEEMDVDEATGAPKKHNGVGGSPPKS. Residue S861 is modified to Phosphoserine. N6-acetyllysine occurs at positions 866 and 876. The interval 889–968 is interaction with OGT; sequence VNNNWYIFMR…YYPAFLDMVR (80 aa). The stretch at 904–933 forms a coiled coil; the sequence is CLRLLRICSQAERQIEEENREREWEREVLG. A phosphoserine mark is found at S941, S1090, and S1113. Residues 1137 to 1157 are disordered; the sequence is CQRGREQQEKEGKEGNSKKTM. Residues 1139–1157 show a composition bias toward basic and acidic residues; it reads RGREQQEKEGKEGNSKKTM.

As to quaternary structure, interacts with ARID4B, BRMS1L, HCFC1, HDAC1, HDAC2, MXI1, SAP30L, SAP130, SFPQ and TOPORS. Interacts with OGT (via TPRs 1-6); the interaction mediates transcriptional repression in parallel with histone deacetylase. Interacts with BAZ2A, MXD1, MXD3, MXD4, MBD2, DACH1, NCOR1, NR4A2, REST, RLIM, SAP30, SETDB1, SMYD2, and SUDS3. Interacts with PHF12 in a complex composed of HDAC1, PHF12 and SAP30. Interacts with TET1; the interaction recruits SIN3A to gene promoters. The large PER complex involved in the histone deacetylation is composed of at least HDAC1, PER2, SFPQ and SIN3A. Interacts with KLF11. Interacts with PPHLN1. Found in a complex with YY1, GON4L and HDAC1. Interacts (via PAH2) with FOXK1. Interacts with FOXK2. Found in a complex composed of at least SINHCAF, SIN3A, HDAC1, SAP30, RBBP4, OGT and TET1. Interacts with SINHCAF. Interacts with SPHK2. SUMO1 sumoylated by TOPORS. Probably desumoylated by SENP2. As to expression, widely expressed. Highest levels in testis, lung and thymus. Expressed at relatively high levels throughout brain development. In adult mice, expression is high in neurogenic regions such as the subventricular zone, rostral migratory stream, olfactory bulb and dentate gyrus.

Its subcellular location is the nucleus. It is found in the nucleolus. Functionally, acts as a transcriptional repressor. Corepressor for REST. Interacts with MXI1 to repress MYC responsive genes and antagonize MYC oncogenic activities. Also interacts with MXD1-MAX heterodimers to repress transcription by tethering SIN3A to DNA. Acts cooperatively with OGT to repress transcription in parallel with histone deacetylation. Involved in the control of the circadian rhythms. Required for the transcriptional repression of circadian target genes, such as PER1, mediated by the large PER complex through histone deacetylation. Cooperates with FOXK1 to regulate cell cycle progression probably by repressing cell cycle inhibitor genes expression. Required for cortical neuron differentiation and callosal axon elongation. The protein is Paired amphipathic helix protein Sin3a (Sin3a) of Mus musculus (Mouse).